The following is a 504-amino-acid chain: Protein anon-37Cs (504 aa).

As to expression, low levels seen in adult heads, thorax, abdomen and ovaries, high levels in testes.

The protein localises to the cytoplasm. Its function is as follows. Has a non-vital function. The sequence is that of Protein anon-37Cs (anon-37Cs) from Drosophila melanogaster (Fruit fly).